Consider the following 296-residue polypeptide: Formamidopyrimidine-DNA glycosylase (296 aa).

Pro2 acts as the Schiff-base intermediate with DNA in catalysis. Glu3 (proton donor) is an active-site residue. Lys61 functions as the Proton donor; for beta-elimination activity in the catalytic mechanism. 3 residues coordinate DNA: His104, Arg123, and Lys169. The FPG-type zinc-finger motif lies at 255–289 (DAYGREGEPCRRCGAIMRRDKFMNRSSFYCPRCQP). Catalysis depends on Arg279, which acts as the Proton donor; for delta-elimination activity.

Belongs to the FPG family. In terms of assembly, monomer. Requires Zn(2+) as cofactor.

The catalysed reaction is Hydrolysis of DNA containing ring-opened 7-methylguanine residues, releasing 2,6-diamino-4-hydroxy-5-(N-methyl)formamidopyrimidine.. The enzyme catalyses 2'-deoxyribonucleotide-(2'-deoxyribose 5'-phosphate)-2'-deoxyribonucleotide-DNA = a 3'-end 2'-deoxyribonucleotide-(2,3-dehydro-2,3-deoxyribose 5'-phosphate)-DNA + a 5'-end 5'-phospho-2'-deoxyribonucleoside-DNA + H(+). In terms of biological role, involved in base excision repair of DNA damaged by oxidation or by mutagenic agents. Acts as a DNA glycosylase that recognizes and removes damaged bases. Has a preference for oxidized purines, such as 7,8-dihydro-8-oxoguanine (8-oxoG). Has AP (apurinic/apyrimidinic) lyase activity and introduces nicks in the DNA strand. Cleaves the DNA backbone by beta-delta elimination to generate a single-strand break at the site of the removed base with both 3'- and 5'-phosphates. The protein is Formamidopyrimidine-DNA glycosylase of Mycobacterium sp. (strain KMS).